We begin with the raw amino-acid sequence, 126 residues long: C-type natriuretic peptide 1 (126 aa).

A signal peptide spans 1–22 (MLCPALLCAALLLLTPVEITDA). The propeptide occupies 23 to 104 (RALQQPSDAA…KRAEPDRSRR (82 aa)). The cysteines at positions 110 and 126 are disulfide-linked.

It belongs to the natriuretic peptide family.

The protein resides in the secreted. In terms of biological role, exhibits natriuretic and vasodepressant activity. Has cGMP-stimulating activity. May help to regulate body fluid homeostasis in a variety of aquatic environments. The chain is C-type natriuretic peptide 1 from Takifugu rubripes (Japanese pufferfish).